The primary structure comprises 806 residues: Volume-regulated anion channel subunit LRRC8E (806 aa).

Topologically, residues 1 to 22 (MIPVAEFKQFTEQQPAFKVLKP) are cytoplasmic. Residues 23–43 (WWDVLAEYITYAMLMIGVFGC) form a helical membrane-spanning segment. Topologically, residues 44-130 (TLQVTQDKII…YETALHWYAK (87 aa)) are extracellular. A disulfide bridge links cysteine 54 with cysteine 311. Asparagine 57 and asparagine 80 each carry an N-linked (GlcNAc...) asparagine glycan. Positions 75 to 104 (QSSASNDSDLETTVPPPTATSSPPREMSGL) are disordered. A helical membrane pass occupies residues 131-151 (YFPYLVVIHTLIFIICGNFWF). Residues 152-275 (KFPGTSSKIE…MRQTVLKVCK (124 aa)) lie on the Cytoplasmic side of the membrane. The interval 182-217 (EVSGESSQEKPNQERSIDRELSKPNFEEGSPATADL) is disordered. Residues 188–207 (SQEKPNQERSIDRELSKPNF) show a composition bias toward basic and acidic residues. Residues 276-296 (FVLITIYNAVLVGKIHFIVPC) traverse the membrane as a helical segment. Topologically, residues 297–323 (SVHTEDMTGYNSFCCNHTKAHLFSKLA) are extracellular. N-linked (GlcNAc...) asparagine glycosylation is present at asparagine 312. The chain crosses the membrane as a helical span at residues 324-344 (ISYLCFLGVYGLTCFYTLYWL). At 345-806 (FRRPLKEYSF…VDVRDKFKED (462 aa)) the chain is on the cytoplasmic side. LRR repeat units lie at residues 569–589 (HLQK…NALK), 593–614 (LVKE…VFSL), 616–637 (NLQV…ISLQ), 641–662 (KLSV…IRKL), 664–685 (GLEE…LFLC), 687–708 (KLRH…IGVL), 710–731 (LLQY…LFFC), 733–754 (KLKT…VGSL), and 756–777 (CLVK…IGNC).

Belongs to the LRRC8 family. As to quaternary structure, heterohexamer; oligomerizes with other LRRC8 proteins (lrrc8a, lrrc8c, lrrc8d and/or lrrc8b) to form a heterohexamer. Detected in a channel complex that contains lrrc8a, lrrc8c and lrrc8e. In vivo, the subunit composition may depend primarily on expression levels, and heterooligomeric channels containing various proportions of the different LRRC8 proteins may coexist.

It localises to the cell membrane. Its subcellular location is the endoplasmic reticulum membrane. The protein localises to the lysosome membrane. The catalysed reaction is chloride(in) = chloride(out). It carries out the reaction iodide(out) = iodide(in). It catalyses the reaction taurine(out) = taurine(in). The enzyme catalyses 2',3'-cGAMP(out) = 2',3'-cGAMP(in). Non-essential component of the volume-regulated anion channel (VRAC, also named VSOAC channel), an anion channel required to maintain a constant cell volume in response to extracellular or intracellular osmotic changes. The VRAC channel conducts iodide better than chloride and can also conduct organic osmolytes like taurine. Mediates efflux of amino acids, such as aspartate, in response to osmotic stress. The VRAC channel also mediates transport of immunoreactive cyclic dinucleotide GMP-AMP (2'-3'-cGAMP), an immune messenger produced in response to DNA virus in the cytosol. Channel activity requires lrrc8a plus at least one other family member (lrrc8b, lrrc8c, lrrc8d or lrrc8e); channel characteristics depend on the precise subunit composition. Also plays a role in lysosome homeostasis by forming functional lysosomal VRAC channels in response to low cytoplasmic ionic strength condition: lysosomal VRAC channels are necessary for the formation of large lysosome-derived vacuoles, which store and then expel excess water to maintain cytosolic water homeostasis. This chain is Volume-regulated anion channel subunit LRRC8E, found in Xenopus laevis (African clawed frog).